We begin with the raw amino-acid sequence, 101 residues long: NAD(P)H-quinone oxidoreductase subunit 4L, chloroplastic (101 aa).

A run of 3 helical transmembrane segments spans residues 2 to 22 (ILEHVLVLSAYLFLIGLYGLI), 32 to 52 (MCLELILNAVNMNFVTFSDFF), and 61 to 81 (IFCIFVIAIAAAEAAIGLAIV).

The protein belongs to the complex I subunit 4L family. As to quaternary structure, NDH is composed of at least 16 different subunits, 5 of which are encoded in the nucleus.

It is found in the plastid. The protein resides in the chloroplast thylakoid membrane. It catalyses the reaction a plastoquinone + NADH + (n+1) H(+)(in) = a plastoquinol + NAD(+) + n H(+)(out). The catalysed reaction is a plastoquinone + NADPH + (n+1) H(+)(in) = a plastoquinol + NADP(+) + n H(+)(out). In terms of biological role, NDH shuttles electrons from NAD(P)H:plastoquinone, via FMN and iron-sulfur (Fe-S) centers, to quinones in the photosynthetic chain and possibly in a chloroplast respiratory chain. The immediate electron acceptor for the enzyme in this species is believed to be plastoquinone. Couples the redox reaction to proton translocation, and thus conserves the redox energy in a proton gradient. In Crucihimalaya wallichii (Rock-cress), this protein is NAD(P)H-quinone oxidoreductase subunit 4L, chloroplastic.